Consider the following 364-residue polypeptide: Putative acetyl-CoA C-acetyltransferase YhfS (364 aa).

Cysteine 82 (acyl-thioester intermediate) is an active-site residue. Histidine 318 functions as the Proton acceptor in the catalytic mechanism.

Belongs to the thiolase-like superfamily. Thiolase family.

Its function is as follows. May be involved in fatty acid metabolism. The chain is Putative acetyl-CoA C-acetyltransferase YhfS (yhfS) from Bacillus subtilis (strain 168).